A 643-amino-acid polypeptide reads, in one-letter code: Phosphomethylpyrimidine synthase (643 aa).

Residues Asn248, Met277, Tyr306, His342, 362–364, 403–406, and Glu442 contribute to the substrate site; these read SRG and DGLR. His446 lines the Zn(2+) pocket. A substrate-binding site is contributed by Tyr469. Residue His510 participates in Zn(2+) binding. Residues Cys590, Cys593, and Cys598 each contribute to the [4Fe-4S] cluster site.

It belongs to the ThiC family. In terms of assembly, homodimer. [4Fe-4S] cluster is required as a cofactor.

The enzyme catalyses 5-amino-1-(5-phospho-beta-D-ribosyl)imidazole + S-adenosyl-L-methionine = 4-amino-2-methyl-5-(phosphooxymethyl)pyrimidine + CO + 5'-deoxyadenosine + formate + L-methionine + 3 H(+). The protein operates within cofactor biosynthesis; thiamine diphosphate biosynthesis. In terms of biological role, catalyzes the synthesis of the hydroxymethylpyrimidine phosphate (HMP-P) moiety of thiamine from aminoimidazole ribotide (AIR) in a radical S-adenosyl-L-methionine (SAM)-dependent reaction. This Burkholderia ambifaria (strain ATCC BAA-244 / DSM 16087 / CCUG 44356 / LMG 19182 / AMMD) (Burkholderia cepacia (strain AMMD)) protein is Phosphomethylpyrimidine synthase.